A 29-amino-acid polypeptide reads, in one-letter code: Dermaseptin-1 (29 aa).

Val-29 is subject to Valine amide.

As to expression, expressed by the skin glands.

It is found in the secreted. In terms of biological role, antimicrobial peptide, active against the Gram-positive bacterium S.aureus, the Gram-negative bacteria E.coli and P.aeruginosa, and the yeasts C.albicans and P.brasiliensis. Has hemolytic activity (40% hemolysis at 128 ug/ml). This is Dermaseptin-1 from Phyllomedusa tarsius (Brownbelly leaf frog).